The following is a 313-amino-acid chain: 4-hydroxy-3-methylbut-2-enyl diphosphate reductase (313 aa).

Residue C12 coordinates [4Fe-4S] cluster. Residues H41 and H74 each coordinate (2E)-4-hydroxy-3-methylbut-2-enyl diphosphate. Residues H41 and H74 each contribute to the dimethylallyl diphosphate site. Residues H41 and H74 each coordinate isopentenyl diphosphate. C96 contacts [4Fe-4S] cluster. H124 serves as a coordination point for (2E)-4-hydroxy-3-methylbut-2-enyl diphosphate. Residue H124 participates in dimethylallyl diphosphate binding. H124 is an isopentenyl diphosphate binding site. E126 serves as the catalytic Proton donor. Residue T164 participates in (2E)-4-hydroxy-3-methylbut-2-enyl diphosphate binding. [4Fe-4S] cluster is bound at residue C194. The (2E)-4-hydroxy-3-methylbut-2-enyl diphosphate site is built by S222, S223, N224, and S266. Dimethylallyl diphosphate is bound by residues S222, S223, N224, and S266. Positions 222, 223, 224, and 266 each coordinate isopentenyl diphosphate.

It belongs to the IspH family. [4Fe-4S] cluster serves as cofactor.

It carries out the reaction isopentenyl diphosphate + 2 oxidized [2Fe-2S]-[ferredoxin] + H2O = (2E)-4-hydroxy-3-methylbut-2-enyl diphosphate + 2 reduced [2Fe-2S]-[ferredoxin] + 2 H(+). It catalyses the reaction dimethylallyl diphosphate + 2 oxidized [2Fe-2S]-[ferredoxin] + H2O = (2E)-4-hydroxy-3-methylbut-2-enyl diphosphate + 2 reduced [2Fe-2S]-[ferredoxin] + 2 H(+). Its pathway is isoprenoid biosynthesis; dimethylallyl diphosphate biosynthesis; dimethylallyl diphosphate from (2E)-4-hydroxy-3-methylbutenyl diphosphate: step 1/1. It participates in isoprenoid biosynthesis; isopentenyl diphosphate biosynthesis via DXP pathway; isopentenyl diphosphate from 1-deoxy-D-xylulose 5-phosphate: step 6/6. Its function is as follows. Catalyzes the conversion of 1-hydroxy-2-methyl-2-(E)-butenyl 4-diphosphate (HMBPP) into a mixture of isopentenyl diphosphate (IPP) and dimethylallyl diphosphate (DMAPP). Acts in the terminal step of the DOXP/MEP pathway for isoprenoid precursor biosynthesis. The polypeptide is 4-hydroxy-3-methylbut-2-enyl diphosphate reductase (Burkholderia pseudomallei (strain 1026b)).